We begin with the raw amino-acid sequence, 263 residues long: Ribonuclease HII (263 aa).

The region spanning 71–262 (QAIAGIDEVG…VKSMCCDSTN (192 aa)) is the RNase H type-2 domain. Aspartate 77, glutamate 78, and aspartate 172 together coordinate a divalent metal cation.

It belongs to the RNase HII family. It depends on Mn(2+) as a cofactor. The cofactor is Mg(2+).

It localises to the cytoplasm. It catalyses the reaction Endonucleolytic cleavage to 5'-phosphomonoester.. Its function is as follows. Endonuclease that specifically degrades the RNA of RNA-DNA hybrids. The chain is Ribonuclease HII from Streptococcus pyogenes serotype M12 (strain MGAS2096).